Here is an 845-residue protein sequence, read N- to C-terminus: Krueppel homolog 1 (845 aa).

The interval 141 to 164 is disordered; that stretch reads QKQQQQQQHESITNAAPTAAPSAQ. 8 consecutive C2H2-type zinc fingers follow at residues 194 to 216, 271 to 293, 299 to 321, 327 to 349, 355 to 377, 383 to 407, 413 to 435, and 441 to 463; these read FKCDQCGMTFGSKSAHTSHTKSH, YQCNVCQKTFAVPARLIRHYRTH, FECEFCHKLFSVKENLQVHRRIH, YKCDVCGRAFEHSGKLHRHMRIH, HKCSVCEKTFIQSGQLVIHMRTH, YKCPEPGCGKGFTCSKQLKVHSRTH, YHCDICFRDFGYNHVLKLHRVQH, and YKCTICDETFKNKKEMEAHIKGH. 2 disordered regions span residues 469–610 and 757–845; these read DDEA…VQGQ and GLRS…AKAS. Composition is skewed to low complexity over residues 474-491, 498-508, and 532-559; these read AAAASAAASTSAGSSAGS, SSNSESSNHSP, and ATLSIPTSSPLSPSSLSSTYSPSASSMA. The span at 582–591 shows a compositional bias: polar residues; the sequence is SGVSSAQPAH. Low complexity predominate over residues 759–775; it reads RSSTESPERSSSPESDS. Over residues 796–809 the composition is skewed to basic and acidic residues; it reads NKGDDGQVDSEKAS. The span at 810 to 823 shows a compositional bias: low complexity; sequence GDGTSAAGGAASVG.

This sequence belongs to the krueppel C2H2-type zinc-finger protein family.

Plays a general role in the hierarchies of gene expression leading to metamorphosis. In Drosophila melanogaster (Fruit fly), this protein is Krueppel homolog 1 (Kr-h1).